Here is a 147-residue protein sequence, read N- to C-terminus: Urease accessory protein UreE (147 aa).

The protein belongs to the UreE family.

It is found in the cytoplasm. Involved in urease metallocenter assembly. Binds nickel. Probably functions as a nickel donor during metallocenter assembly. The polypeptide is Urease accessory protein UreE (Marinomonas sp. (strain MWYL1)).